Consider the following 389-residue polypeptide: 1-deoxy-D-xylulose 5-phosphate reductoisomerase (389 aa).

NADPH-binding residues include Ser-11, Gly-12, Ser-13, Val-14, Asn-39, and Asn-122. Lys-123 lines the 1-deoxy-D-xylulose 5-phosphate pocket. Glu-124 is an NADPH binding site. Asp-148 contacts Mn(2+). Residues Ser-149, Glu-150, Ser-174, and His-197 each coordinate 1-deoxy-D-xylulose 5-phosphate. Residue Glu-150 participates in Mn(2+) binding. Residue Gly-203 coordinates NADPH. Positions 210, 215, 216, and 219 each coordinate 1-deoxy-D-xylulose 5-phosphate. Glu-219 contributes to the Mn(2+) binding site.

The protein belongs to the DXR family. Requires Mg(2+) as cofactor. It depends on Mn(2+) as a cofactor.

It catalyses the reaction 2-C-methyl-D-erythritol 4-phosphate + NADP(+) = 1-deoxy-D-xylulose 5-phosphate + NADPH + H(+). It participates in isoprenoid biosynthesis; isopentenyl diphosphate biosynthesis via DXP pathway; isopentenyl diphosphate from 1-deoxy-D-xylulose 5-phosphate: step 1/6. In terms of biological role, catalyzes the NADPH-dependent rearrangement and reduction of 1-deoxy-D-xylulose-5-phosphate (DXP) to 2-C-methyl-D-erythritol 4-phosphate (MEP). This chain is 1-deoxy-D-xylulose 5-phosphate reductoisomerase, found in Leptospira borgpetersenii serovar Hardjo-bovis (strain JB197).